Reading from the N-terminus, the 261-residue chain is Malonyl-[acyl-carrier protein] O-methyltransferase (261 aa).

Belongs to the methyltransferase superfamily.

The catalysed reaction is malonyl-[ACP] + S-adenosyl-L-methionine = malonyl-[ACP] methyl ester + S-adenosyl-L-homocysteine. It functions in the pathway cofactor biosynthesis; biotin biosynthesis. Its function is as follows. Converts the free carboxyl group of a malonyl-thioester to its methyl ester by transfer of a methyl group from S-adenosyl-L-methionine (SAM). It allows to synthesize pimeloyl-ACP via the fatty acid synthetic pathway. The protein is Malonyl-[acyl-carrier protein] O-methyltransferase of Bacteroides thetaiotaomicron (strain ATCC 29148 / DSM 2079 / JCM 5827 / CCUG 10774 / NCTC 10582 / VPI-5482 / E50).